Here is a 542-residue protein sequence, read N- to C-terminus: Chaperonin GroEL (542 aa).

Residues 29–32, 86–90, glycine 413, 477–479, and aspartate 493 each bind ATP; these read TIGP, DGTTT, and NAA.

The protein belongs to the chaperonin (HSP60) family. Forms a cylinder of 14 subunits composed of two heptameric rings stacked back-to-back. Interacts with the co-chaperonin GroES.

It localises to the cytoplasm. It catalyses the reaction ATP + H2O + a folded polypeptide = ADP + phosphate + an unfolded polypeptide.. Together with its co-chaperonin GroES, plays an essential role in assisting protein folding. The GroEL-GroES system forms a nano-cage that allows encapsulation of the non-native substrate proteins and provides a physical environment optimized to promote and accelerate protein folding. The chain is Chaperonin GroEL from Lactobacillus acidophilus (strain ATCC 700396 / NCK56 / N2 / NCFM).